We begin with the raw amino-acid sequence, 251 residues long: Ditrans,polycis-undecaprenyl-diphosphate synthase ((2E,6E)-farnesyl-diphosphate specific) (251 aa).

Asp-20 is a catalytic residue. Asp-20 lines the Mg(2+) pocket. Substrate is bound by residues 21–24, Trp-25, Arg-33, His-37, and 65–67; these read GNGR and SSE. The active-site Proton acceptor is the Asn-68. Substrate contacts are provided by residues Trp-69, Arg-71, Arg-188, and 194–196; that span reads RIS. Glu-207 contacts Mg(2+).

The protein belongs to the UPP synthase family. In terms of assembly, homodimer. Requires Mg(2+) as cofactor.

The enzyme catalyses 8 isopentenyl diphosphate + (2E,6E)-farnesyl diphosphate = di-trans,octa-cis-undecaprenyl diphosphate + 8 diphosphate. Catalyzes the sequential condensation of isopentenyl diphosphate (IPP) with (2E,6E)-farnesyl diphosphate (E,E-FPP) to yield (2Z,6Z,10Z,14Z,18Z,22Z,26Z,30Z,34E,38E)-undecaprenyl diphosphate (di-trans,octa-cis-UPP). UPP is the precursor of glycosyl carrier lipid in the biosynthesis of bacterial cell wall polysaccharide components such as peptidoglycan and lipopolysaccharide. In Vibrio parahaemolyticus serotype O3:K6 (strain RIMD 2210633), this protein is Ditrans,polycis-undecaprenyl-diphosphate synthase ((2E,6E)-farnesyl-diphosphate specific).